A 928-amino-acid chain; its full sequence is Isoleucine--tRNA ligase (928 aa).

Positions 57-67 (PFANGNIHMGH) match the 'HIGH' region motif. Position 552 (Glu-552) interacts with L-isoleucyl-5'-AMP. Positions 593-597 (KMSKS) match the 'KMSKS' region motif. Residue Lys-596 coordinates ATP. Zn(2+) contacts are provided by Cys-887, Cys-890, Cys-907, and Cys-910.

The protein belongs to the class-I aminoacyl-tRNA synthetase family. IleS type 1 subfamily. In terms of assembly, monomer. Requires Zn(2+) as cofactor.

It localises to the cytoplasm. It catalyses the reaction tRNA(Ile) + L-isoleucine + ATP = L-isoleucyl-tRNA(Ile) + AMP + diphosphate. Catalyzes the attachment of isoleucine to tRNA(Ile). As IleRS can inadvertently accommodate and process structurally similar amino acids such as valine, to avoid such errors it has two additional distinct tRNA(Ile)-dependent editing activities. One activity is designated as 'pretransfer' editing and involves the hydrolysis of activated Val-AMP. The other activity is designated 'posttransfer' editing and involves deacylation of mischarged Val-tRNA(Ile). This is Isoleucine--tRNA ligase from Lacticaseibacillus paracasei (strain ATCC 334 / BCRC 17002 / CCUG 31169 / CIP 107868 / KCTC 3260 / NRRL B-441) (Lactobacillus paracasei).